The chain runs to 142 residues: Large ribosomal subunit protein uL13 (142 aa).

It belongs to the universal ribosomal protein uL13 family. Part of the 50S ribosomal subunit.

This protein is one of the early assembly proteins of the 50S ribosomal subunit, although it is not seen to bind rRNA by itself. It is important during the early stages of 50S assembly. The protein is Large ribosomal subunit protein uL13 of Vibrio vulnificus (strain CMCP6).